Consider the following 345-residue polypeptide: Transcription factor 19 (345 aa).

Residues 31–88 (YRLGHRADLCDVALRPQQEPGLISGIHAELHAEPRGDDWRVSLEDHSSQGTLVNNVRL) enclose the FHA domain. Ser78 bears the Phosphoserine mark. 2 disordered regions span residues 147-167 (AGFR…STLS) and 190-227 (LTFS…RKSV). Residues 293 to 342 (AAPCCCLPQEETVAWVQCDGCDVWFHVACVGCSIQAAREADFRCPGCRAG) form a PHD-type zinc finger. Cys296, Cys298, Cys310, Cys313, His318, Cys321, Cys336, and Cys339 together coordinate Zn(2+).

Its subcellular location is the nucleus. In terms of biological role, potential transcription factor that may play a role in the regulation of genes involved in cell cycle G1/S transition. May bind to regulatory elements of genes, including the promoter of the transcription factor FOXO1. This chain is Transcription factor 19 (TCF19), found in Pan troglodytes (Chimpanzee).